Here is a 1026-residue protein sequence, read N- to C-terminus: DNA polymerase catalytic subunit (1026 aa).

Residues 664-695 (LKTWLAKRKSIKKELEQCQDAKMKTILDKQQL) are a coiled coil.

It belongs to the DNA polymerase type-B family.

The protein localises to the host nucleus. The catalysed reaction is DNA(n) + a 2'-deoxyribonucleoside 5'-triphosphate = DNA(n+1) + diphosphate. Functionally, replicates viral genomic DNA. This Alcelaphine herpesvirus 1 (strain C500) (AlHV-1) protein is DNA polymerase catalytic subunit (9).